The following is a 144-amino-acid chain: Putative pre-16S rRNA nuclease (144 aa).

This sequence belongs to the YqgF nuclease family.

The protein resides in the cytoplasm. Could be a nuclease involved in processing of the 5'-end of pre-16S rRNA. This Prochlorococcus marinus (strain NATL1A) protein is Putative pre-16S rRNA nuclease.